The sequence spans 96 residues: Large ribosomal subunit protein bL28 (96 aa).

A disordered region spans residues 1-24 (MSRSCELTGKGVQSGHNVSHANNK).

It belongs to the bacterial ribosomal protein bL28 family.

This chain is Large ribosomal subunit protein bL28, found in Sinorhizobium fredii (strain NBRC 101917 / NGR234).